The primary structure comprises 319 residues: Tyrosine--tRNA ligase (319 aa).

L-tyrosine is bound at residue Tyr40. The 'HIGH' region signature appears at 45-53 (PSGRIHMGH). Residues Tyr159, Gln163, Asp166, and Gln181 each contribute to the L-tyrosine site. Positions 216 to 220 (KMSSS) match the 'KMSKS' region motif. Ser219 is an ATP binding site.

Belongs to the class-I aminoacyl-tRNA synthetase family. TyrS type 3 subfamily. As to quaternary structure, homodimer.

The protein localises to the cytoplasm. It catalyses the reaction tRNA(Tyr) + L-tyrosine + ATP = L-tyrosyl-tRNA(Tyr) + AMP + diphosphate + H(+). Its function is as follows. Catalyzes the attachment of tyrosine to tRNA(Tyr) in a two-step reaction: tyrosine is first activated by ATP to form Tyr-AMP and then transferred to the acceptor end of tRNA(Tyr). The sequence is that of Tyrosine--tRNA ligase from Methanococcus maripaludis (strain DSM 14266 / JCM 13030 / NBRC 101832 / S2 / LL).